The primary structure comprises 98 residues: Co-chaperonin GroES 3 (98 aa).

The protein belongs to the GroES chaperonin family. As to quaternary structure, heptamer of 7 subunits arranged in a ring. Interacts with the chaperonin GroEL.

It localises to the cytoplasm. Its function is as follows. Together with the chaperonin GroEL, plays an essential role in assisting protein folding. The GroEL-GroES system forms a nano-cage that allows encapsulation of the non-native substrate proteins and provides a physical environment optimized to promote and accelerate protein folding. GroES binds to the apical surface of the GroEL ring, thereby capping the opening of the GroEL channel. This is Co-chaperonin GroES 3 from Mesorhizobium japonicum (strain LMG 29417 / CECT 9101 / MAFF 303099) (Mesorhizobium loti (strain MAFF 303099)).